Here is a 123-residue protein sequence, read N- to C-terminus: Large ribosomal subunit protein bL20 (123 aa).

It belongs to the bacterial ribosomal protein bL20 family.

In terms of biological role, binds directly to 23S ribosomal RNA and is necessary for the in vitro assembly process of the 50S ribosomal subunit. It is not involved in the protein synthesizing functions of that subunit. The protein is Large ribosomal subunit protein bL20 of Chlamydia trachomatis serovar L2b (strain UCH-1/proctitis).